A 618-amino-acid polypeptide reads, in one-letter code: Pyranose 2-oxidase (618 aa).

H170 is modified (tele-8alpha-FAD histidine). Residues Q441 and H443 each contribute to the substrate site. H540 acts as the Proton acceptor in catalysis. The active site involves N583.

This sequence belongs to the GMC oxidoreductase family. In terms of assembly, homotetramer. Requires FAD as cofactor.

The enzyme catalyses D-glucose + O2 = 2-dehydro-D-glucose + H2O2. Catalyzes the oxidation of various aldopyranoses and disaccharides on carbon-2 to the corresponding 2-keto sugars concomitant with the reduction of O(2) to H(2)O(2). The sequence is that of Pyranose 2-oxidase (p2ox) from Lyophyllum shimeji (Hon-shimeji).